The sequence spans 164 residues: Phosphopantetheine adenylyltransferase (164 aa).

Substrate is bound at residue Ser9. ATP is bound by residues 9-10 (SF) and His17. Residues Lys41, Leu73, and Arg87 each coordinate substrate. Residues Glu98 and 122–128 (YSFLSSS) each bind ATP.

The protein belongs to the bacterial CoaD family. In terms of assembly, homohexamer. Mg(2+) serves as cofactor.

The protein localises to the cytoplasm. The enzyme catalyses (R)-4'-phosphopantetheine + ATP + H(+) = 3'-dephospho-CoA + diphosphate. It functions in the pathway cofactor biosynthesis; coenzyme A biosynthesis; CoA from (R)-pantothenate: step 4/5. Its function is as follows. Reversibly transfers an adenylyl group from ATP to 4'-phosphopantetheine, yielding dephospho-CoA (dPCoA) and pyrophosphate. In Thermobifida fusca (strain YX), this protein is Phosphopantetheine adenylyltransferase.